Here is a 241-residue protein sequence, read N- to C-terminus: Large ribosomal subunit protein uL30 (241 aa).

Residues 1 to 25 (MASTLKPETLVKKSKAQQKTAEERA) form a disordered region.

It belongs to the universal ribosomal protein uL30 family.

This chain is Large ribosomal subunit protein uL30 (RPL7), found in Debaryomyces hansenii (strain ATCC 36239 / CBS 767 / BCRC 21394 / JCM 1990 / NBRC 0083 / IGC 2968) (Yeast).